Reading from the N-terminus, the 397-residue chain is Subtilisin-like protease 12 (397 aa).

The N-terminal stretch at 1–19 (MSIFKLMVIYFTLFWVVNA) is a signal peptide. A propeptide spanning residues 20–116 (AQLLDLDSHG…VEPNREMKAA (97 aa)) is cleaved from the precursor. Residues 35–115 (YIVVMKNGVS…FVEPNREMKA (81 aa)) enclose the Inhibitor I9 domain. N-linked (GlcNAc...) asparagine glycans are attached at residues N123, N136, and N150. The Peptidase S8 domain occupies 125–397 (TWGLARISHM…DKLLYNGSGA (273 aa)). Active-site charge relay system residues include D157 and H188. Residues N249, N305, and N334 are each glycosylated (N-linked (GlcNAc...) asparagine). Catalysis depends on S343, which acts as the Charge relay system. N-linked (GlcNAc...) asparagine glycans are attached at residues N385 and N393.

The protein belongs to the peptidase S8 family.

The protein resides in the secreted. Secreted subtilisin-like serine protease with keratinolytic activity that contributes to pathogenicity. The protein is Subtilisin-like protease 12 (SUB12) of Arthroderma gypseum (strain ATCC MYA-4604 / CBS 118893) (Microsporum gypseum).